A 488-amino-acid chain; its full sequence is Homoserine O-acetyltransferase (488 aa).

The AB hydrolase-1 domain occupies asparagine 47–glutamate 355. Serine 153 acts as the Nucleophile in catalysis. Arginine 222 contacts substrate. Catalysis depends on residues aspartate 316 and histidine 349. Aspartate 350 serves as a coordination point for substrate. CBS domains follow at residues methionine 376–leucine 433 and methionine 437–glycine 488.

It belongs to the AB hydrolase superfamily. MetX family. In terms of assembly, homodimer.

The protein resides in the cytoplasm. The catalysed reaction is L-homoserine + acetyl-CoA = O-acetyl-L-homoserine + CoA. The protein operates within amino-acid biosynthesis; L-methionine biosynthesis via de novo pathway; O-acetyl-L-homoserine from L-homoserine: step 1/1. Transfers an acetyl group from acetyl-CoA to L-homoserine, forming acetyl-L-homoserine. The protein is Homoserine O-acetyltransferase of Methanococcoides burtonii (strain DSM 6242 / NBRC 107633 / OCM 468 / ACE-M).